Consider the following 189-residue polypeptide: Cytidylate kinase (189 aa).

ATP is bound at residue G7–S15.

Belongs to the cytidylate kinase family. Type 2 subfamily.

It localises to the cytoplasm. The catalysed reaction is CMP + ATP = CDP + ADP. It carries out the reaction dCMP + ATP = dCDP + ADP. The chain is Cytidylate kinase from Saccharolobus islandicus (strain Y.N.15.51 / Yellowstone #2) (Sulfolobus islandicus).